Consider the following 224-residue polypeptide: Probable mitochondrial import inner membrane translocase subunit Tim17 4 (224 aa).

3 consecutive transmembrane segments (helical) span residues 16-36 (CGCA…LKGF), 60-80 (AIAG…CVMV), and 115-135 (AFVG…VATI).

The protein belongs to the Tim17/Tim22/Tim23 family. In terms of assembly, component of the TIM23 complex at least composed of Tim23, Tim17 (Tim17a1, Tim17a2 or Tim17b1) and a Tim50. The complex interacts with the Tim44 component of the PAM complex.

Its subcellular location is the mitochondrion inner membrane. Its function is as follows. Essential component of the TIM23 complex, a complex that mediates the translocation of transit peptide-containing proteins across the mitochondrial inner membrane. In Drosophila melanogaster (Fruit fly), this protein is Probable mitochondrial import inner membrane translocase subunit Tim17 4 (Tim17a2).